Reading from the N-terminus, the 341-residue chain is Glyceraldehyde-3-phosphate dehydrogenase 2 (341 aa).

NAD(+) is bound by residues 12–13 (RI), Arg-78, and Thr-120. D-glyceraldehyde 3-phosphate contacts are provided by residues 152–154 (SCT) and Thr-183. The Nucleophile role is filled by Cys-153. Asn-184 is a binding site for NAD(+). D-glyceraldehyde 3-phosphate contacts are provided by residues Arg-198, 211–212 (TG), and Arg-234. Residue Asn-313 coordinates NAD(+).

This sequence belongs to the glyceraldehyde-3-phosphate dehydrogenase family. As to quaternary structure, homotetramer.

It is found in the cytoplasm. It carries out the reaction D-glyceraldehyde 3-phosphate + phosphate + NAD(+) = (2R)-3-phospho-glyceroyl phosphate + NADH + H(+). The protein operates within carbohydrate degradation; glycolysis; pyruvate from D-glyceraldehyde 3-phosphate: step 1/5. Catalyzes the oxidative phosphorylation of glyceraldehyde 3-phosphate (G3P) to 1,3-bisphosphoglycerate (BPG) using the cofactor NAD. The first reaction step involves the formation of a hemiacetal intermediate between G3P and a cysteine residue, and this hemiacetal intermediate is then oxidized to a thioester, with concomitant reduction of NAD to NADH. The reduced NADH is then exchanged with the second NAD, and the thioester is attacked by a nucleophilic inorganic phosphate to produce BPG. The sequence is that of Glyceraldehyde-3-phosphate dehydrogenase 2 (gapA2) from Staphylococcus epidermidis (strain ATCC 35984 / DSM 28319 / BCRC 17069 / CCUG 31568 / BM 3577 / RP62A).